The chain runs to 117 residues: cAMP-regulated phosphoprotein 19-A (117 aa).

The segment covering 1–37 (MSGENQETKAQEESSALEQKEIDDKVVSPEKSEEIKL) has biased composition (basic and acidic residues). Residues 1-54 (MSGENQETKAQEESSALEQKEIDDKVVSPEKSEEIKLKARYPNLGPKPGGSDFL) form a disordered region. At S28 the chain carries Phosphoserine; by CDK2. S67 bears the Phosphoserine; by GWL mark. The tract at residues 78–117 (KNKQLPTAASDKTEVTGDHIPTPQDLPQRKPSLVASKLAG) is disordered. T99 carries the post-translational modification Phosphothreonine; by CDK2. Phosphoserine; by PKA is present on S109.

It belongs to the endosulfine family. As to quaternary structure, interacts (when phosphorylated at Ser-67) with ppp2r2d. Phosphorylation at Ser-67 by gwl during mitosis is essential for interaction with ppp2r2d (PR55-delta) and subsequent inactivation of PP2A. Phosphorylated by PKA.

The protein localises to the cytoplasm. Functionally, protein phosphatase inhibitor that specifically inhibits protein phosphatase 2A (PP2A) during mitosis. When phosphorylated at Ser-67 during mitosis, specifically interacts with ppp2r2d (PR55-delta) and inhibits its activity, leading to inactivation of PP2A, an essential condition to keep cyclin-B1-CDK1 activity high during M phase. The polypeptide is cAMP-regulated phosphoprotein 19-A (arpp19-a) (Xenopus laevis (African clawed frog)).